Consider the following 225-residue polypeptide: Probable polyketide biosynthesis zinc-dependent hydrolase PksB (225 aa).

Residues His62, His64, Asp66, His67, His123, Asp140, and His181 each coordinate Zn(2+).

It belongs to the metallo-beta-lactamase superfamily. The cofactor is Zn(2+).

It is found in the cytoplasm. The protein operates within antibiotic biosynthesis; bacillaene biosynthesis. Functionally, probably involved in some intermediate steps for the synthesis of the antibiotic polyketide bacillaene which is involved in secondary metabolism. This is Probable polyketide biosynthesis zinc-dependent hydrolase PksB (pksB) from Bacillus subtilis (strain 168).